Here is a 381-residue protein sequence, read N- to C-terminus: Diguanylate cyclase DosC (381 aa).

His-98 contacts heme. The GGDEF domain occupies 325-381 (TPLSVLIIDVDKFKEINDTWGHNTGDEILRKVSFLSQKRLVKSKILGAGSSRKLAVS). Asp-333 contributes to the Mg(2+) binding site. Residues Asn-341 and Asp-350 each coordinate substrate.

The cofactor is heme. It depends on Mg(2+) as a cofactor.

It catalyses the reaction 2 GTP = 3',3'-c-di-GMP + 2 diphosphate. The protein operates within purine metabolism; 3',5'-cyclic di-GMP biosynthesis. Functionally, globin-coupled heme-based oxygen sensor protein displaying diguanylate cyclase (DGC) activity in response to oxygen availability. Thus, catalyzes the synthesis of cyclic diguanylate (c-di-GMP) via the condensation of 2 GTP molecules. Cyclic-di-GMP is a second messenger which controls cell surface-associated traits in bacteria. The polypeptide is Diguanylate cyclase DosC (dosC) (Shigella flexneri).